Reading from the N-terminus, the 233-residue chain is Large ribosomal subunit protein uL1 (233 aa).

The protein belongs to the universal ribosomal protein uL1 family. Part of the 50S ribosomal subunit.

Its function is as follows. Binds directly to 23S rRNA. The L1 stalk is quite mobile in the ribosome, and is involved in E site tRNA release. In terms of biological role, protein L1 is also a translational repressor protein, it controls the translation of the L11 operon by binding to its mRNA. The protein is Large ribosomal subunit protein uL1 of Rhizobium johnstonii (strain DSM 114642 / LMG 32736 / 3841) (Rhizobium leguminosarum bv. viciae).